The sequence spans 507 residues: Glycerol kinase (507 aa).

Threonine 12 contributes to the ADP binding site. ATP-binding residues include threonine 12, threonine 13, and serine 14. Threonine 12 lines the sn-glycerol 3-phosphate pocket. ADP is bound at residue arginine 16. Sn-glycerol 3-phosphate-binding residues include arginine 82, glutamate 83, tyrosine 134, and aspartate 250. Glycerol-binding residues include arginine 82, glutamate 83, tyrosine 134, aspartate 250, and glutamine 251. 2 residues coordinate ADP: threonine 272 and glycine 316. Residues threonine 272, glycine 316, glutamine 320, and glycine 417 each contribute to the ATP site. Residues glycine 417 and asparagine 421 each contribute to the ADP site.

The protein belongs to the FGGY kinase family.

It carries out the reaction glycerol + ATP = sn-glycerol 3-phosphate + ADP + H(+). It participates in polyol metabolism; glycerol degradation via glycerol kinase pathway; sn-glycerol 3-phosphate from glycerol: step 1/1. Inhibited by fructose 1,6-bisphosphate (FBP). Its function is as follows. Key enzyme in the regulation of glycerol uptake and metabolism. Catalyzes the phosphorylation of glycerol to yield sn-glycerol 3-phosphate. The chain is Glycerol kinase from Beijerinckia indica subsp. indica (strain ATCC 9039 / DSM 1715 / NCIMB 8712).